We begin with the raw amino-acid sequence, 1070 residues long: DNA-directed RNA polymerase subunit beta (1070 aa).

It belongs to the RNA polymerase beta chain family. As to quaternary structure, in plastids the minimal PEP RNA polymerase catalytic core is composed of four subunits: alpha, beta, beta', and beta''. When a (nuclear-encoded) sigma factor is associated with the core the holoenzyme is formed, which can initiate transcription.

The protein localises to the plastid. It is found in the chloroplast. The catalysed reaction is RNA(n) + a ribonucleoside 5'-triphosphate = RNA(n+1) + diphosphate. In terms of biological role, DNA-dependent RNA polymerase catalyzes the transcription of DNA into RNA using the four ribonucleoside triphosphates as substrates. The chain is DNA-directed RNA polymerase subunit beta from Nicotiana tomentosiformis (Tobacco).